The chain runs to 1147 residues: Protein lin-41 (1147 aa).

The segment at 1–93 is disordered; the sequence is MATIVPCSLE…PPSMIQSPQQ (93 aa). Over residues 33-47 the composition is skewed to low complexity; that stretch reads SGNELSMGGSSSEGD. Positions 48–65 are enriched in basic and acidic residues; it reads SMSHHRGEHSPNHHHQDN. A compositionally biased stretch (low complexity) spans 84–93; sequence PPSMIQSPQQ. An RING-type zinc finger spans residues 114–155; sequence CSVCSKSSTIGVLPFVCAHKTCQSCYQMTPSSYDRRACKLCG. The B box-type; atypical zinc-finger motif lies at 366–412; it reads MGPIQCQGCESKISFAYCMQCQEALCIHCVQAHQRVRATKQHAFVEL. Zn(2+) contacts are provided by cysteine 371, cysteine 374, cysteine 394, and histidine 398. The stretch at 565 to 618 forms a coiled coil; that stretch reads AFDTHVNALEERRKELLKRVETVKNLKLSVLISQAESLQSKQIDLQQAIQTATK. The Filamin repeat unit spans residues 723–817; sequence ACGDLLSSSI…ISGCPTTMDI (95 aa). NHL repeat units lie at residues 832 to 875, 879 to 922, 926 to 969, 974 to 1017, 1022 to 1065, and 1107 to 1147; these read ILTF…FDKD, ISKF…FDEN, LLKF…FTPQ, RKCG…LSPR, MKVY…FASD, and SAPT…IRVF. The interval 1104–1123 is disordered; sequence AFSSAPTPLTPSPRQLLDRP.

This sequence belongs to the TRIM/RBCC family.

The protein localises to the cytoplasm. The protein resides in the P-body. Its function is as follows. Heterochronic protein which acts downstream of let-7 in temporal patterning. Plays a role in the developmental timing of postembryonic hypodermal seam cell division and fusion events and adult alae production. Represses lin-29 during late larval stages, which prevents terminal differentiation of hypodermal seam cells and promotes their division. Involved in post-transcriptional gene regulation, uses two independent pathways. Has direct and specific RNA-binding activity and, depending on the location (5'UTR or 3'UTR) of the target site, triggers either mRNA decay or repression of translation. Degrades the mRNA of transcription factor dmd-3 to govern the timing and extent of male tail tip morphogenesis. Plays a role in the sexual maturation of the nervous system. The sequence is that of Protein lin-41 from Caenorhabditis elegans.